The sequence spans 310 residues: AA9 family lytic polysaccharide monooxygenase A (310 aa).

The N-terminal stretch at 1 to 21 (MPSTKVAALSAVLALASTVAG) is a signal peptide. Cu(2+) is bound by residues histidine 22 and histidine 107. 2 disulfide bridges follow: cysteine 77/cysteine 199 and cysteine 118/cysteine 122. N-linked (GlcNAc...) asparagine glycans are attached at residues asparagine 121 and asparagine 159. Residue histidine 185 participates in O2 binding. Cu(2+) is bound at residue tyrosine 196.

This sequence belongs to the polysaccharide monooxygenase AA9 family. Cu(2+) is required as a cofactor.

It localises to the secreted. The enzyme catalyses [(1-&gt;4)-beta-D-glucosyl]n+m + reduced acceptor + O2 = 4-dehydro-beta-D-glucosyl-[(1-&gt;4)-beta-D-glucosyl]n-1 + [(1-&gt;4)-beta-D-glucosyl]m + acceptor + H2O.. Functionally, lytic polysaccharide monooxygenase (LPMO) that depolymerizes crystalline and amorphous polysaccharides via the oxidation of scissile alpha- or beta-(1-4)-glycosidic bonds, yielding C1, C4 as well as C6 oxidation products. Catalysis by LPMOs requires the reduction of the active-site copper from Cu(II) to Cu(I) by a reducing agent and H(2)O(2) or O(2) as a cosubstrate. Active on cellulose, but not on xylan, starch, or chitin. This chain is AA9 family lytic polysaccharide monooxygenase A, found in Talaromyces pinophilus (Penicillium pinophilum).